A 417-amino-acid polypeptide reads, in one-letter code: N-acetylmuramoyl-L-alanine amidase AmiC (417 aa).

Residues 1 to 31 constitute a signal peptide (tat-type signal); it reads MSGSNTAISRRRLLQGAGAMWLLSVSQVSLA. The tract at residues 166-185 is disordered; that stretch reads LEKQVPPAQSGPQPGKAGRD. Positions 190 to 404 constitute a MurNAc-LAA domain; it reads IMLDPGHGGE…VAESILAGIK (215 aa).

It belongs to the N-acetylmuramoyl-L-alanine amidase 3 family. Predicted to be exported by the Tat system. The position of the signal peptide cleavage has not been experimentally proven.

It localises to the periplasm. The enzyme catalyses Hydrolyzes the link between N-acetylmuramoyl residues and L-amino acid residues in certain cell-wall glycopeptides.. Its function is as follows. Cell-wall hydrolase involved in septum cleavage during cell division. This chain is N-acetylmuramoyl-L-alanine amidase AmiC (amiC), found in Escherichia coli O6:H1 (strain CFT073 / ATCC 700928 / UPEC).